The sequence spans 822 residues: DNA gyrase subunit A (822 aa).

In terms of domain architecture, Topo IIA-type catalytic spans leucine 32–leucine 497. Residue tyrosine 120 is the O-(5'-phospho-DNA)-tyrosine intermediate of the active site. Positions glutamine 524–glycine 530 match the GyrA-box motif.

The protein belongs to the type II topoisomerase GyrA/ParC subunit family. As to quaternary structure, heterotetramer, composed of two GyrA and two GyrB chains. In the heterotetramer, GyrA contains the active site tyrosine that forms a transient covalent intermediate with DNA, while GyrB binds cofactors and catalyzes ATP hydrolysis.

The protein resides in the cytoplasm. It catalyses the reaction ATP-dependent breakage, passage and rejoining of double-stranded DNA.. In terms of biological role, a type II topoisomerase that negatively supercoils closed circular double-stranded (ds) DNA in an ATP-dependent manner to modulate DNA topology and maintain chromosomes in an underwound state. Negative supercoiling favors strand separation, and DNA replication, transcription, recombination and repair, all of which involve strand separation. Also able to catalyze the interconversion of other topological isomers of dsDNA rings, including catenanes and knotted rings. Type II topoisomerases break and join 2 DNA strands simultaneously in an ATP-dependent manner. The chain is DNA gyrase subunit A from Streptococcus pneumoniae (strain ATCC BAA-255 / R6).